A 338-amino-acid chain; its full sequence is Glycerol-3-phosphate dehydrogenase [NAD(P)+] (338 aa).

NADPH-binding residues include Ser-13, Trp-14, and Lys-108. Sn-glycerol 3-phosphate-binding residues include Lys-108, Gly-139, and Ser-141. Ala-143 provides a ligand contact to NADPH. Residues Lys-194, Asp-247, Ser-257, Arg-258, and Asn-259 each coordinate sn-glycerol 3-phosphate. Lys-194 (proton acceptor) is an active-site residue. Arg-258 contacts NADPH. The NADPH site is built by Val-282 and Glu-284.

It belongs to the NAD-dependent glycerol-3-phosphate dehydrogenase family.

The protein resides in the cytoplasm. It catalyses the reaction sn-glycerol 3-phosphate + NAD(+) = dihydroxyacetone phosphate + NADH + H(+). The catalysed reaction is sn-glycerol 3-phosphate + NADP(+) = dihydroxyacetone phosphate + NADPH + H(+). It participates in membrane lipid metabolism; glycerophospholipid metabolism. Its function is as follows. Catalyzes the reduction of the glycolytic intermediate dihydroxyacetone phosphate (DHAP) to sn-glycerol 3-phosphate (G3P), the key precursor for phospholipid synthesis. This is Glycerol-3-phosphate dehydrogenase [NAD(P)+] from Streptococcus agalactiae serotype V (strain ATCC BAA-611 / 2603 V/R).